Reading from the N-terminus, the 514-residue chain is tRNA-2-methylthio-N(6)-dimethylallyladenosine synthase (514 aa).

An MTTase N-terminal domain is found at 68–186; the sequence is RTFLIKTYGC…LPEILEEAYL (119 aa). [4Fe-4S] cluster-binding residues include Cys-77, Cys-113, Cys-147, Cys-223, Cys-227, and Cys-230. In terms of domain architecture, Radical SAM core spans 209–439; it reads RDGHIKAWVN…NKKVGIYSQQ (231 aa). In terms of domain architecture, TRAM spans 442-505; the sequence is SQYEGKIVTV…QYSLNGTFIQ (64 aa).

This sequence belongs to the methylthiotransferase family. MiaB subfamily. In terms of assembly, monomer. [4Fe-4S] cluster serves as cofactor.

It localises to the cytoplasm. It catalyses the reaction N(6)-dimethylallyladenosine(37) in tRNA + (sulfur carrier)-SH + AH2 + 2 S-adenosyl-L-methionine = 2-methylsulfanyl-N(6)-dimethylallyladenosine(37) in tRNA + (sulfur carrier)-H + 5'-deoxyadenosine + L-methionine + A + S-adenosyl-L-homocysteine + 2 H(+). Catalyzes the methylthiolation of N6-(dimethylallyl)adenosine (i(6)A), leading to the formation of 2-methylthio-N6-(dimethylallyl)adenosine (ms(2)i(6)A) at position 37 in tRNAs that read codons beginning with uridine. The chain is tRNA-2-methylthio-N(6)-dimethylallyladenosine synthase from Staphylococcus epidermidis (strain ATCC 35984 / DSM 28319 / BCRC 17069 / CCUG 31568 / BM 3577 / RP62A).